The primary structure comprises 578 residues: 2-succinyl-5-enolpyruvyl-6-hydroxy-3-cyclohexene-1-carboxylate synthase (578 aa).

It belongs to the TPP enzyme family. MenD subfamily. Homodimer. Mg(2+) serves as cofactor. The cofactor is Mn(2+). Thiamine diphosphate is required as a cofactor.

It catalyses the reaction isochorismate + 2-oxoglutarate + H(+) = 5-enolpyruvoyl-6-hydroxy-2-succinyl-cyclohex-3-ene-1-carboxylate + CO2. It functions in the pathway quinol/quinone metabolism; 1,4-dihydroxy-2-naphthoate biosynthesis; 1,4-dihydroxy-2-naphthoate from chorismate: step 2/7. Its pathway is quinol/quinone metabolism; menaquinone biosynthesis. Functionally, catalyzes the thiamine diphosphate-dependent decarboxylation of 2-oxoglutarate and the subsequent addition of the resulting succinic semialdehyde-thiamine pyrophosphate anion to isochorismate to yield 2-succinyl-5-enolpyruvyl-6-hydroxy-3-cyclohexene-1-carboxylate (SEPHCHC). This is 2-succinyl-5-enolpyruvyl-6-hydroxy-3-cyclohexene-1-carboxylate synthase from Prosthecochloris aestuarii (strain DSM 271 / SK 413).